The sequence spans 43 residues: METATLVAIFISCLLVSFTGYAPYTASGQPSNELRDLFEEHED.

The helical transmembrane segment at 5 to 27 threads the bilayer; sequence TLVAIFISCLLVSFTGYAPYTAS.

The protein belongs to the PsbN family.

Its subcellular location is the plastid. The protein localises to the chloroplast thylakoid membrane. In terms of biological role, may play a role in photosystem I and II biogenesis. This Anthoceros angustus (Hornwort) protein is Protein PsbN.